A 755-amino-acid polypeptide reads, in one-letter code: 17S U2 SnRNP complex component HTATSF1 (755 aa).

Disordered stretches follow at residues 1-53 (MSGT…YEWD) and 81-122 (GASS…KAES). Ser2 carries the N-acetylserine modification. Residues 90-122 (EDVHARTAEEPPQEKAPEPTDARKKGEKRKAES) show a composition bias toward basic and acidic residues. RRM domains follow at residues 133-218 (TNVY…VAKF) and 264-349 (RVVI…AWDG). Positions 259–353 (RMRHERVVII…AQAWDGTTDY (95 aa)) are U2AF homology motif (UHM). At Lys297 the chain carries N6-acetyllysine. The interval 380–415 (RGLRRSDSVSASERAGPSRARHFSEHPSTSKMNAQE) is disordered. Residues 381–755 (GLRRSDSVSA…LSSDDDDDDI (375 aa)) form a mediates interaction with the P-TEFb complex region. Phosphoserine is present on residues Ser387, Ser403, Ser407, and Ser409. Residues 405–415 (HPSTSKMNAQE) are compositionally biased toward polar residues. Glycyl lysine isopeptide (Lys-Gly) (interchain with G-Cter in SUMO2) cross-links involve residues Lys429 and Lys430. The interval 433 to 755 (KTEDGGEFEE…LSSDDDDDDI (323 aa)) is disordered. Residues Ser445, Ser452, and Ser453 each carry the phosphoserine modification. Over residues 462–476 (CPEKESEEGCPKRGF) the composition is skewed to basic and acidic residues. Phosphoserine occurs at positions 481, 485, 494, 498, 521, and 529. The segment covering 508–538 (LKNDCEENGLAKESEDDLNKESEEEVGPTKE) has biased composition (basic and acidic residues). The span at 539–552 (SEEDDSEKESDEDC) shows a compositional bias: acidic residues. The span at 553-563 (SEKQSEDGSER) shows a compositional bias: basic and acidic residues. A phosphoserine mark is found at Ser557, Ser561, and Ser579. Acidic residues predominate over residues 564 to 579 (EFEENGLEKDLDEEGS). The segment covering 580–590 (EKELHENVLDK) has biased composition (basic and acidic residues). The span at 591–606 (ELEENDSENSEFEDDG) shows a compositional bias: acidic residues. A phosphoserine mark is found at Ser597, Ser600, Ser607, Ser616, and Ser624. 2 stretches are compositionally biased toward acidic residues: residues 613 to 633 (EEGSEREFDEDSDEKEEEEDT) and 640 to 651 (DESDEKEDEEYA). Position 633 is a phosphothreonine (Thr633). Ser642 carries the post-translational modification Phosphoserine. Residues 652–674 (DEKGLEAADKKAEEGDADEKLFE) show a composition bias toward basic and acidic residues. A compositionally biased stretch (acidic residues) spans 675 to 713 (ESDDKEDEDADGKEVEDADEKLFEDDDSNEKLFDEEEDS). Phosphoserine is present on residues Ser676, Ser702, Ser713, Ser714, and Ser721. Residues 714–725 (SEKLFDDSDERG) are compositionally biased toward basic and acidic residues. Position 748 is a phosphoserine; by CK2 (Ser748).

It belongs to the HTATSF1 family. As to quaternary structure, component of the 17S U2 SnRNP complex, a ribonucleoprotein complex that contains small nuclear RNA (snRNA) U2 and a number of specific proteins. Within the 17S U2 SnRNP complex, interacts (via UHM region) directly with SF3B1. Component of a complex which is at least composed of HTATSF1/Tat-SF1, the P-TEFb complex components CDK9 and CCNT1, RNA polymerase II, SUPT5H, and NCL/nucleolin. Interacts with GTF2F2/RAP30 and POLR2A. Interacts with TCERG1/CA150. Interacts with (poly-ADP-ribosylated) RPA1; promoting HTATSF1 recruitment to DNA damage sites. Interacts (when phosphorylated) with TOPBP1; promoting recruitment of TOPBP1 to DNA damage sites during S-phase. In terms of processing, phosphorylation at Ser-748 by CK2 during S-phase in response to DNA damage promotes interaction with TOPBP1 and double-strand break (DSB) repair via homologous recombination. Widely expressed.

It is found in the nucleus. It localises to the chromosome. Functionally, component of the 17S U2 SnRNP complex of the spliceosome, a large ribonucleoprotein complex that removes introns from transcribed pre-mRNAs. The 17S U2 SnRNP complex (1) directly participates in early spliceosome assembly and (2) mediates recognition of the intron branch site during pre-mRNA splicing by promoting the selection of the pre-mRNA branch-site adenosine, the nucleophile for the first step of splicing. Within the 17S U2 SnRNP complex, HTATSF1 is required to stabilize the branchpoint-interacting stem loop. HTATSF1 is displaced from the 17S U2 SnRNP complex before the stable addition of the 17S U2 SnRNP complex to the spliceosome, destabilizing the branchpoint-interacting stem loop and allowing to probe intron branch site sequences. Also acts as a regulator of transcriptional elongation, possibly by mediating the reciprocal stimulatory effect of splicing on transcriptional elongation. Involved in double-strand break (DSB) repair via homologous recombination in S-phase by promoting the recruitment of TOPBP1 to DNA damage sites. Mechanistically, HTATSF1 is (1) recruited to DNA damage sites in S-phase via interaction with poly-ADP-ribosylated RPA1 and (2) phosphorylated by CK2, promoting recruitment of TOPBP1, thereby facilitating RAD51 nucleofilaments formation and RPA displacement, followed by homologous recombination. In terms of biological role, (Microbial infection) In case of infection by HIV-1, it is up-regulated by the HIV-1 proteins NEF and gp120, acts as a cofactor required for the Tat-enhanced transcription of the virus. This Homo sapiens (Human) protein is 17S U2 SnRNP complex component HTATSF1.